The chain runs to 605 residues: Capsid scaffolding protein (605 aa).

Catalysis depends on charge relay system residues histidine 48, serine 116, and histidine 139. The segment at 235–274 (ASDAPDLQKPDKALQSPPPASTDPATMLSGNAGEGATACG) is disordered. Residues 281 to 300 (QDLISVPRNTFMTLLQTNLD) form an interaction with pAP region. Disordered stretches follow at residues 403–431 (DYVP…FPGE) and 489–588 (PHQS…KSVS). The Nuclear localization signal motif lies at 410-416 (RSNKRKR). Residues 568–579 (ASASGVAQSKEP) show a composition bias toward polar residues. The interval 585–605 (KSVSAHLKSIFCEELLNKRVA) is interaction with major capsid protein.

Belongs to the herpesviridae capsid scaffolding protein family. In terms of assembly, homomultimer. Interacts with major capsid protein. As to quaternary structure, exists in a monomer-dimer equilibrium with the dimer being the active species. Post-translationally, capsid scaffolding protein is cleaved by assemblin after formation of the spherical procapsid. As a result, the capsid obtains its mature, icosahedral shape. Cleavages occur at two or more sites: release (R-site) and maturation (M-site).

The protein resides in the host cytoplasm. It is found in the host nucleus. The catalysed reaction is Cleaves -Ala-|-Ser- and -Ala-|-Ala- bonds in the scaffold protein.. Functionally, acts as a scaffold protein by binding major capsid protein in the cytoplasm, inducing the nuclear localization of both proteins. Multimerizes in the nucleus such as major capsid protein forms the icosahedral T=16 capsid. Autocatalytic cleavage releases the assembly protein, and subsequently abolishes interaction with major capsid protein. Cleavages products are evicted from the capsid before or during DNA packaging. Its function is as follows. Protease that plays an essential role in virion assembly within the nucleus. Catalyzes the cleavage of the assembly protein after formation of the spherical procapsid. By that cleavage, the capsid matures and gains its icosahedral shape. The cleavage sites seem to include -Ala-Ser-, -Ala-Ala-, as well as Ala-Thr bonds. Assemblin and cleavages products are evicted from the capsid before or during DNA packaging. Plays a major role in capsid assembly. Acts as a scaffold protein by binding major capsid protein. Multimerizes in the nucleus such as major capsid protein forms the icosahedral T=16 capsid. Cleaved by assemblin after capsid completion. The cleavages products are evicted from the capsid before or during DNA packaging. In Homo sapiens (Human), this protein is Capsid scaffolding protein.